We begin with the raw amino-acid sequence, 206 residues long: Large ribosomal subunit protein uL4 (206 aa).

This sequence belongs to the universal ribosomal protein uL4 family. In terms of assembly, part of the 50S ribosomal subunit.

One of the primary rRNA binding proteins, this protein initially binds near the 5'-end of the 23S rRNA. It is important during the early stages of 50S assembly. It makes multiple contacts with different domains of the 23S rRNA in the assembled 50S subunit and ribosome. In terms of biological role, forms part of the polypeptide exit tunnel. The chain is Large ribosomal subunit protein uL4 from Nitrobacter hamburgensis (strain DSM 10229 / NCIMB 13809 / X14).